A 313-amino-acid polypeptide reads, in one-letter code: MEAAVLRVKRKRGADPADALILSCKRIRTEDETKESSAVTTQVFRLAATVKSENEPLHKYVREAISRNQSCLTLRPSSESKQRIQEELRASKEAERQVSRYRIISSHRPNSEEDNVGASHLIGCSSQDVPSETQDEAEATEATKSHISSPFQLFDMVQEEPEQKYLEKDSEPETILCNSIKMIREHLTVSEAGQESEHREYVDEYVYDIYYSEASQHGWIQDILYVQPYTEEQELVSEEPEPEEIYEDEDDENEENNWRNDYPDEEDSDREERYIGYYEDGDEEEKSAGHAWKMYHRSSLREIGDDDENADLY.

Disordered regions lie at residues 76–96, 127–151, and 232–272; these read PSSE…EAER, QDVP…SSPF, and EQEL…DREE. The span at 78–96 shows a compositional bias: basic and acidic residues; the sequence is SESKQRIQEELRASKEAER. Over residues 232 to 255 the composition is skewed to acidic residues; that stretch reads EQELVSEEPEPEEIYEDEDDENEE.

Belongs to the IWR1/SLC7A6OS family.

The protein resides in the cytoplasm. Its subcellular location is the nucleus. Its function is as follows. Directs RNA polymerase II nuclear import. The chain is Probable RNA polymerase II nuclear localization protein SLC7A6OS (slc7a6os) from Xenopus laevis (African clawed frog).